The following is a 386-amino-acid chain: Homoserine O-succinyltransferase (386 aa).

The AB hydrolase-1 domain maps to 49–358 (NAILICHALS…DAEQGHDSFL (310 aa)). Serine 156 (nucleophile) is an active-site residue. Position 226 (arginine 226) interacts with substrate. Catalysis depends on residues aspartate 321 and histidine 354. Residue aspartate 355 participates in substrate binding.

Belongs to the AB hydrolase superfamily. MetX family. In terms of assembly, homodimer.

It is found in the cytoplasm. The enzyme catalyses L-homoserine + succinyl-CoA = O-succinyl-L-homoserine + CoA. It participates in amino-acid biosynthesis; L-methionine biosynthesis via de novo pathway; O-succinyl-L-homoserine from L-homoserine: step 1/1. Transfers a succinyl group from succinyl-CoA to L-homoserine, forming succinyl-L-homoserine. This Acinetobacter baumannii (strain AB307-0294) protein is Homoserine O-succinyltransferase.